Here is a 310-residue protein sequence, read N- to C-terminus: tRNA-cytidine(32) 2-sulfurtransferase (310 aa).

Positions 47–52 (SGGKDS) match the PP-loop motif motif. C122, C125, and C213 together coordinate [4Fe-4S] cluster.

It belongs to the TtcA family. In terms of assembly, homodimer. Mg(2+) is required as a cofactor. It depends on [4Fe-4S] cluster as a cofactor.

Its subcellular location is the cytoplasm. The enzyme catalyses cytidine(32) in tRNA + S-sulfanyl-L-cysteinyl-[cysteine desulfurase] + AH2 + ATP = 2-thiocytidine(32) in tRNA + L-cysteinyl-[cysteine desulfurase] + A + AMP + diphosphate + H(+). It functions in the pathway tRNA modification. Its function is as follows. Catalyzes the ATP-dependent 2-thiolation of cytidine in position 32 of tRNA, to form 2-thiocytidine (s(2)C32). The sulfur atoms are provided by the cysteine/cysteine desulfurase (IscS) system. In Serratia proteamaculans (strain 568), this protein is tRNA-cytidine(32) 2-sulfurtransferase.